Here is a 797-residue protein sequence, read N- to C-terminus: Trafficking protein particle complex subunit 12 (797 aa).

Disordered regions lie at residues 1–257 (META…PSLS) and 286–338 (SNPN…VPES). A compositionally biased stretch (low complexity) spans 9–23 (QSPSEASPSAQAGPE). Residues 29 to 43 (MSREEESQPLYHEET) show a composition bias toward basic and acidic residues. Residues 47 to 58 (GGDEFASEENEP) show a composition bias toward acidic residues. Composition is skewed to basic and acidic residues over residues 66 to 75 (FGDKLNEHMM) and 107 to 121 (ATDH…KEVV). 2 positions are modified to phosphoserine: serine 125 and serine 128. The residue at position 130 (threonine 130) is a Phosphothreonine. Over residues 173–185 (VGPKDSLAPREEQ) the composition is skewed to basic and acidic residues. A compositionally biased stretch (polar residues) spans 206–216 (IFSQATATPSQ). The segment covering 232-244 (SPSFSSTSETSAK) has biased composition (low complexity). Phosphoserine occurs at positions 234, 309, and 314. TPR repeat units follow at residues 607 to 640 (GRVL…YPEQ), 642 to 675 (PQLL…TQKL), 682 to 715 (IMVL…DPTN), and 716 to 749 (AVAN…DPRH).

Component of the multisubunit TRAPP (transport protein particle) complex, which includes at least TRAPPC2, TRAPPC2L, TRAPPC3, TRAPPC3L, TRAPPC4, TRAPPC5, TRAPPC8, TRAPPC9, TRAPPC10, TRAPPC11 and TRAPPC12. Interacts with CENPE. Post-translationally, phosphorylated as the cells enter mitosis but is dephosphorylated at or before the onset of anaphase. The phosphorylated form recruits CENPE to kinetochores more efficiently than the non-phosphorylated form.

It localises to the endoplasmic reticulum-Golgi intermediate compartment. The protein localises to the nucleus. Functionally, component of the TRAPP complex, which is involved in endoplasmic reticulum to Golgi apparatus trafficking at a very early stage. Also plays a role in chromosome congression, kinetochore assembly and stability and controls the recruitment of CENPE to the kinetochores. The polypeptide is Trafficking protein particle complex subunit 12 (Mus musculus (Mouse)).